Consider the following 446-residue polypeptide: Tubulin gamma chain (446 aa).

Position 142 to 148 (142 to 148 (AGGTGSG)) interacts with GTP.

Belongs to the tubulin family. As to quaternary structure, interacts with mto1. Interacts with mto2.

It localises to the cytoplasm. Its subcellular location is the cytoskeleton. The protein resides in the microtubule organizing center. The protein localises to the spindle pole body. Its function is as follows. Tubulin is the major constituent of microtubules. The gamma chain is found at microtubule organizing centers (MTOC) such as the spindle poles or the centrosome, suggesting that it is involved in the minus-end nucleation of microtubule assembly. The sequence is that of Tubulin gamma chain from Schizosaccharomyces pombe (strain 972 / ATCC 24843) (Fission yeast).